The chain runs to 158 residues: Ribosome maturation factor RimP (158 aa).

This sequence belongs to the RimP family.

It is found in the cytoplasm. Functionally, required for maturation of 30S ribosomal subunits. This chain is Ribosome maturation factor RimP, found in Pseudomonas syringae pv. tomato (strain ATCC BAA-871 / DC3000).